The chain runs to 536 residues: Putative ATP-dependent RNA helicase L364 (536 aa).

The Helicase ATP-binding domain maps to 47–214; the sequence is ISILLKYFLV…IPFYLMNFIP (168 aa). 60–67 is an ATP binding site; it reads SDTGVGKT. A DEAH box motif is present at residues 160–163; it reads DESH. Residues 288–334 adopt a coiled-coil conformation; the sequence is LSDDSDKIAEAYEEIAELMRELEEKKTQCKNHLAKIQKLKQEIELRK. Residues 338–486 form the Helicase C-terminal domain; the sequence is FIEQTQLYLE…ISAINDGDLE (149 aa). The tract at residues 502-536 is disordered; that stretch reads VLNEPVNNPIEEPVNDPVKDPVEDLTDNQPNIVEV.

This sequence belongs to the DEAD box helicase family. DEAH subfamily.

It carries out the reaction ATP + H2O = ADP + phosphate + H(+). In Acanthamoeba polyphaga (Amoeba), this protein is Putative ATP-dependent RNA helicase L364.